Consider the following 555-residue polypeptide: Potassium-transporting ATPase potassium-binding subunit (555 aa).

10 consecutive transmembrane segments (helical) span residues 2–22, 60–80, 130–150, 173–193, 246–266, 278–298, 374–394, 412–432, 483–503, and 525–545; these read IWVA…PTGI, QYAL…YFIF, IGIT…VMAF, VFLP…VPQT, MSNI…PFTY, ILFV…TTSE, AGFV…GLMV, LIAV…ALAL, LVMF…AASL, and GIFI…MLVL.

This sequence belongs to the KdpA family. The system is composed of three essential subunits: KdpA, KdpB and KdpC.

Its subcellular location is the cell membrane. In terms of biological role, part of the high-affinity ATP-driven potassium transport (or Kdp) system, which catalyzes the hydrolysis of ATP coupled with the electrogenic transport of potassium into the cytoplasm. This subunit binds the extracellular potassium ions and delivers the ions to the membrane domain of KdpB through an intramembrane tunnel. This chain is Potassium-transporting ATPase potassium-binding subunit, found in Bacillus cereus (strain Q1).